A 482-amino-acid chain; its full sequence is Pup--protein ligase (482 aa).

Glutamate 16 is a Mg(2+) binding site. An ATP-binding site is contributed by arginine 60. Tyrosine 62 provides a ligand contact to Mg(2+). The Proton acceptor role is filled by aspartate 64. Position 70 (glutamate 70) interacts with Mg(2+). ATP is bound by residues threonine 73 and tryptophan 440.

This sequence belongs to the Pup ligase/Pup deamidase family. Pup-conjugating enzyme subfamily.

It catalyses the reaction ATP + [prokaryotic ubiquitin-like protein]-L-glutamate + [protein]-L-lysine = ADP + phosphate + N(6)-([prokaryotic ubiquitin-like protein]-gamma-L-glutamyl)-[protein]-L-lysine.. Its pathway is protein degradation; proteasomal Pup-dependent pathway. The protein operates within protein modification; protein pupylation. Functionally, catalyzes the covalent attachment of the prokaryotic ubiquitin-like protein modifier Pup to the proteasomal substrate proteins, thereby targeting them for proteasomal degradation. This tagging system is termed pupylation. The ligation reaction involves the side-chain carboxylate of the C-terminal glutamate of Pup and the side-chain amino group of a substrate lysine. This Corynebacterium glutamicum (strain R) protein is Pup--protein ligase.